Reading from the N-terminus, the 421-residue chain is uncharacterized protein (421 aa).

Lys249 is subject to N6-(pyridoxal phosphate)lysine.

The protein belongs to the class-I pyridoxal-phosphate-dependent aminotransferase family. Pyridoxal 5'-phosphate is required as a cofactor.

Its subcellular location is the cytoplasm. This is an uncharacterized protein from Schizosaccharomyces pombe (strain 972 / ATCC 24843) (Fission yeast).